A 113-amino-acid polypeptide reads, in one-letter code: Prefoldin subunit beta (113 aa).

This sequence belongs to the prefoldin subunit beta family. As to quaternary structure, heterohexamer of two alpha and four beta subunits.

It is found in the cytoplasm. Functionally, molecular chaperone capable of stabilizing a range of proteins. Seems to fulfill an ATP-independent, HSP70-like function in archaeal de novo protein folding. The sequence is that of Prefoldin subunit beta from Methanococcus maripaludis (strain C6 / ATCC BAA-1332).